The chain runs to 221 residues: Endo-1,4-beta-xylanase I (221 aa).

Residues 1–30 (MVSFTSIITAAVAATGALAAPATDVSLVAR) form the signal peptide. The region spanning 31-219 (QNTPNGEGTH…STGNAQITVN (189 aa)) is the GH11 domain. Glutamate 115 (nucleophile) is an active-site residue. Positions 126–157 (DPSSQSQNKGTVTSDGSSYKIAQSTRTNQPSI) are disordered. Glutamate 206 acts as the Proton donor in catalysis.

It belongs to the glycosyl hydrolase 11 (cellulase G) family. Post-translationally, the N-terminus is blocked.

The protein localises to the secreted. It catalyses the reaction Endohydrolysis of (1-&gt;4)-beta-D-xylosidic linkages in xylans.. It functions in the pathway glycan degradation; xylan degradation. Functionally, major xylan-degrading enzyme. Contributes to the hydrolysis of arabinoxylan, the major component of maize cell-walls. This chain is Endo-1,4-beta-xylanase I (XYL1), found in Cochliobolus carbonum (Maize leaf spot fungus).